Here is a 372-residue protein sequence, read N- to C-terminus: Cytochrome b (372 aa).

4 helical membrane-spanning segments follow: residues 25–45, 69–90, 105–125, and 170–190; these read FGSM…FLSM, WMMQ…YIHV, WLSG…GYVL, and FFAL…LHIM. Residues His75 and His89 each contribute to the heme b site. 2 residues coordinate heme b: His174 and His188. Residue His193 participates in a ubiquinone binding. A run of 4 helical transmembrane segments spans residues 218 to 238, 280 to 300, 312 to 332, and 339 to 358; these read YKDL…ISFI, LGGA…PFTH, FMQL…WTAT, and YTMI…MSNP.

It belongs to the cytochrome b family. The cytochrome bc1 complex contains 3 respiratory subunits (MT-CYB, CYC1 and UQCRFS1), 2 core proteins (UQCRC1 and UQCRC2) and probably 6 low-molecular weight proteins. Heme b is required as a cofactor.

The protein localises to the mitochondrion inner membrane. Component of the ubiquinol-cytochrome c reductase complex (complex III or cytochrome b-c1 complex) that is part of the mitochondrial respiratory chain. The b-c1 complex mediates electron transfer from ubiquinol to cytochrome c. Contributes to the generation of a proton gradient across the mitochondrial membrane that is then used for ATP synthesis. This is Cytochrome b (MT-CYB) from Acrantophis madagascariensis (Madagascar ground boa).